The chain runs to 421 residues: Acetate kinase (421 aa).

Residue Asn7 participates in Mg(2+) binding. Lys14 is a binding site for ATP. Residue Arg91 participates in substrate binding. Asp148 acts as the Proton donor/acceptor in catalysis. ATP is bound by residues 208 to 212 (HIGNG) and 283 to 285 (DRR). Position 387 (Glu387) interacts with Mg(2+).

Belongs to the acetokinase family. In terms of assembly, homodimer. Mg(2+) serves as cofactor. It depends on Mn(2+) as a cofactor.

It is found in the cytoplasm. The catalysed reaction is acetate + ATP = acetyl phosphate + ADP. The protein operates within metabolic intermediate biosynthesis; acetyl-CoA biosynthesis; acetyl-CoA from acetate: step 1/2. Its function is as follows. Catalyzes the formation of acetyl phosphate from acetate and ATP. Can also catalyze the reverse reaction. This is Acetate kinase from Trichlorobacter lovleyi (strain ATCC BAA-1151 / DSM 17278 / SZ) (Geobacter lovleyi).